Here is a 217-residue protein sequence, read N- to C-terminus: Adenylate kinase (217 aa).

Gly-10 to Thr-15 provides a ligand contact to ATP. The NMP stretch occupies residues Ser-30–Val-59. Residues Thr-31, Arg-36, Gly-57–Val-59, Gly-85–Arg-88, and Gln-92 contribute to the AMP site. The LID stretch occupies residues Gly-122 to Asp-159. ATP contacts are provided by residues Arg-123 and Thr-132–Tyr-133. Positions 156 and 167 each coordinate AMP. Gly-203 contacts ATP.

This sequence belongs to the adenylate kinase family. Monomer.

It localises to the cytoplasm. The enzyme catalyses AMP + ATP = 2 ADP. It participates in purine metabolism; AMP biosynthesis via salvage pathway; AMP from ADP: step 1/1. Its function is as follows. Catalyzes the reversible transfer of the terminal phosphate group between ATP and AMP. Plays an important role in cellular energy homeostasis and in adenine nucleotide metabolism. In Methylibium petroleiphilum (strain ATCC BAA-1232 / LMG 22953 / PM1), this protein is Adenylate kinase.